Reading from the N-terminus, the 159-residue chain is V-type proton ATPase 16 kDa proteolipid subunit c (159 aa).

Residues 1-12 (MSSEVSSDNPIY) are Lumenal-facing. A helical membrane pass occupies residues 13–35 (GPFFGVMGAASAIIFSALGAAYG). Residues 36-57 (TAKSGTGIAAMSVMRPELIMKS) lie on the Cytoplasmic side of the membrane. Residues 58-78 (IIPVVMAGIIAIYGLVVAVLI) form a helical membrane-spanning segment. The Lumenal segment spans residues 79–96 (AGALEEPSKYSLYRGFIH). A helical membrane pass occupies residues 97–118 (LGAGLAVGFSGLAAGFAIGIVG). The Cytoplasmic portion of the chain corresponds to 119–130 (DAGVRGTAQQPR). A helical membrane pass occupies residues 131–156 (LFVGMILILIFAEVLGLYGLIVAIYL). The Lumenal portion of the chain corresponds to 157–159 (YTK).

The protein belongs to the V-ATPase proteolipid subunit family. V-ATPase is a heteromultimeric enzyme made up of two complexes: the ATP-hydrolytic V1 complex and the proton translocation V0 complex. The V1 complex consists of three catalytic AB heterodimers that form a heterohexamer, three peripheral stalks each consisting of EG heterodimers, one central rotor including subunits D and F, and the regulatory subunits C and H. The proton translocation complex V0 consists of the proton transport subunit a, a ring of proteolipid subunits c9c'', rotary subunit d, subunits e and f, and the accessory subunits VhaAC45 and ATP6AP2. Expressed in the larval middle mid-gut; predominantly in the copper cell region with lower levels of expression in the interstitial cells.

It localises to the membrane. Its function is as follows. Proton-conducting pore forming subunit of the V0 complex of vacuolar(H+)-ATPase (V-ATPase), a multisubunit enzyme composed of a peripheral complex (V1) that hydrolyzes ATP and a membrane integral complex (V0) that translocates protons. V-ATPase is responsible for acidifying and maintaining the pH of intracellular compartments and in some cell types, is targeted to the plasma membrane, where it is responsible for acidifying the extracellular environment. In enterocytes, acts as part of a pHCl-2 sensory pathway which mediates Tor-dependent larval growth and metabolism in response to zinc availability. Likely acts in maintaining enterocyte lysosomal acidification which consequently promotes Tor activation at the lysosome membrane. The chain is V-type proton ATPase 16 kDa proteolipid subunit c (Vha16-1) from Drosophila melanogaster (Fruit fly).